We begin with the raw amino-acid sequence, 445 residues long: Disintegrin and metalloproteinase domain-containing protein 18 (445 aa).

Positions isoleucine 1–serine 106 constitute a Peptidase M12B domain. Over isoleucine 1–serine 409 the chain is Extracellular. 3 cysteine pairs are disulfide-bonded: cysteine 18–cysteine 101, cysteine 60–cysteine 85, and cysteine 62–cysteine 67. 2 N-linked (GlcNAc...) asparagine glycosylation sites follow: asparagine 19 and asparagine 59. N-linked (GlcNAc...) asparagine glycosylation is found at asparagine 84 and asparagine 131. The Disintegrin domain occupies glutamine 113 to aspartate 202. An intrachain disulfide couples cysteine 173 to cysteine 194. 2 N-linked (GlcNAc...) asparagine glycosylation sites follow: asparagine 333 and asparagine 340. An EGF-like domain is found at threonine 342 to asparagine 376. 3 disulfides stabilise this stretch: cysteine 346–cysteine 358, cysteine 352–cysteine 364, and cysteine 366–cysteine 375. Residues tryptophan 410 to isoleucine 430 traverse the membrane as a helical segment. The Cytoplasmic portion of the chain corresponds to lysine 431–arginine 445.

Post-translationally, the prodomain and the metalloprotease-like domain are cleaved during the epididymal maturation of the spermatozoa. As to expression, expressed specifically in testis.

The protein localises to the membrane. Functionally, sperm surface membrane protein that may be involved in spermatogenesis and fertilization. This is a non catalytic metalloprotease-like protein. The sequence is that of Disintegrin and metalloproteinase domain-containing protein 18 (Adam18) from Rattus norvegicus (Rat).